Reading from the N-terminus, the 308-residue chain is Methionyl-tRNA formyltransferase (308 aa).

110–113 is a binding site for (6S)-5,6,7,8-tetrahydrofolate; that stretch reads SLLP.

Belongs to the Fmt family.

It catalyses the reaction L-methionyl-tRNA(fMet) + (6R)-10-formyltetrahydrofolate = N-formyl-L-methionyl-tRNA(fMet) + (6S)-5,6,7,8-tetrahydrofolate + H(+). Functionally, attaches a formyl group to the free amino group of methionyl-tRNA(fMet). The formyl group appears to play a dual role in the initiator identity of N-formylmethionyl-tRNA by promoting its recognition by IF2 and preventing the misappropriation of this tRNA by the elongation apparatus. The polypeptide is Methionyl-tRNA formyltransferase (Neisseria meningitidis serogroup A / serotype 4A (strain DSM 15465 / Z2491)).